The following is a 395-amino-acid chain: Phosphopentomutase (395 aa).

Residues aspartate 14, aspartate 289, histidine 294, aspartate 330, histidine 331, and histidine 342 each contribute to the Mn(2+) site.

The protein belongs to the phosphopentomutase family. Requires Mn(2+) as cofactor.

The protein resides in the cytoplasm. It catalyses the reaction 2-deoxy-alpha-D-ribose 1-phosphate = 2-deoxy-D-ribose 5-phosphate. It carries out the reaction alpha-D-ribose 1-phosphate = D-ribose 5-phosphate. It participates in carbohydrate degradation; 2-deoxy-D-ribose 1-phosphate degradation; D-glyceraldehyde 3-phosphate and acetaldehyde from 2-deoxy-alpha-D-ribose 1-phosphate: step 1/2. Functionally, isomerase that catalyzes the conversion of deoxy-ribose 1-phosphate (dRib-1-P) and ribose 1-phosphate (Rib-1-P) to deoxy-ribose 5-phosphate (dRib-5-P) and ribose 5-phosphate (Rib-5-P), respectively. This chain is Phosphopentomutase, found in Mycoplasmopsis pulmonis (strain UAB CTIP) (Mycoplasma pulmonis).